We begin with the raw amino-acid sequence, 856 residues long: Envelope glycoprotein gp160 (856 aa).

Positions 1 to 31 (MRVKGIRRNYQHWWGWGTMLLGLLMICSATE) are cleaved as a signal peptide. The Extracellular portion of the chain corresponds to 32 to 685 (KLWVTVYYGV…ITNWLWYIKI (654 aa)). A disulfide bond links Cys53 and Cys73. Residues Asn87, Asn129, Asn135, Asn140, Asn141, Asn146, Asn161, Asn165, Asn191, and Asn202 are each glycosylated (N-linked (GlcNAc...) asparagine; by host). Intrachain disulfides connect Cys118–Cys210, Cys125–Cys201, Cys130–Cys162, Cys223–Cys252, and Cys233–Cys244. Residues 130 to 161 (CTDLRNTTNTNNSTANNNSNSEGTIKGGEMKN) form a V1 region. Residues 162 to 201 (CSFNITTSIRDKMQKEYALLYKLDIVSIDNDSTSYRLISC) form a V2 region. Asn246, Asn267, Asn281, Asn294, and Asn300 each carry an N-linked (GlcNAc...) asparagine; by host glycan. The interval 301-334 (CTRPNYNKRKRIHIGPGRAFYTTKNIIGTIRQAH) is V3. Cys301 and Cys335 are oxidised to a cystine. Residues Asn336, Asn343, Asn359, and Asn365 are each glycosylated (N-linked (GlcNAc...) asparagine; by host). The interval 367–377 (SSGGDPEIVMH) is CD4-binding loop. Cystine bridges form between Cys381-Cys445 and Cys388-Cys418. Residues 388-418 (CNTSPLFNSTWNGNNTWNNTTGSNNNITLQC) form a V4 region. 5 N-linked (GlcNAc...) asparagine; by host glycosylation sites follow: Asn395, Asn401, Asn405, Asn406, and Asn413. The essential for CD4-binding; epitope recognized by the antibody YZ23 stretch occupies residues 421-433 (KQIINMWQEVGKA). N-linked (GlcNAc...) asparagine; by host glycosylation is found at Asn448 and Asn465. 2 V5 regions span residues 461 to 473 (DTDTNDTEIFRPG) and 463 to 473 (DTNDTEIFRPG). The segment at 514-533 (AAIGALFLGFLGAAGSTMGA) is fusion peptide. The immunosuppression stretch occupies residues 575–593 (KQLQARVLAVERYLKDQQL). A disulfide bridge links Cys599 with Cys605. N-linked (GlcNAc...) asparagine; by host glycans are attached at residues Asn612, Asn617, Asn626, and Asn638. Positions 634–668 (REIDNYTSLIYSLLEKSQTQQEKNEQELLELDKWA) form a coiled coil. Residues 663–684 (ELDKWASLWNWFDITNWLWYIK) form an MPER; binding to GalCer region. Residues 686-706 (FIMIVGGLVGLRIVFAVLSIV) form a helical membrane-spanning segment. Topologically, residues 707-856 (NRVRQGYSPL…IRQGLERALL (150 aa)) are cytoplasmic. Residues 713 to 716 (YSPL) carry the YXXL motif; contains endocytosis signal motif. The segment at 717–744 (SLQTRPPVPRGPDRPEGIEEEGGERDRD) is disordered. The Di-leucine internalization motif signature appears at 855–856 (LL).

It belongs to the HIV-1 env protein family. As to quaternary structure, the mature envelope protein (Env) consists of a homotrimer of non-covalently associated gp120-gp41 heterodimers. The resulting complex protrudes from the virus surface as a spike. There seems to be as few as 10 spikes on the average virion. Interacts with host CD4, CCR5 and CXCR4. Gp120 also interacts with the C-type lectins CD209/DC-SIGN and CLEC4M/DC-SIGNR (collectively referred to as DC-SIGN(R)). Gp120 and gp41 interact with GalCer. Gp120 interacts with host ITGA4/ITGB7 complex; on CD4+ T-cells, this interaction results in rapid activation of integrin ITGAL/LFA-1, which facilitates efficient cell-to-cell spreading of HIV-1. Gp120 interacts with cell-associated heparan sulfate; this interaction increases virus infectivity on permissive cells and may be involved in infection of CD4- cells. The mature envelope protein (Env) consists of a homotrimer of non-covalently associated gp120-gp41 heterodimers. The resulting complex protrudes from the virus surface as a spike. There seems to be as few as 10 spikes on the average virion. In terms of processing, highly glycosylated by host. The high number of glycan on the protein is reffered to as 'glycan shield' because it contributes to hide protein sequence from adaptive immune system. Post-translationally, palmitoylation of the transmembrane protein and of Env polyprotein (prior to its proteolytic cleavage) is essential for their association with host cell membrane lipid rafts. Palmitoylation is therefore required for envelope trafficking to classical lipid rafts, but not for viral replication. Specific enzymatic cleavages in vivo yield mature proteins. Envelope glycoproteins are synthesized as an inactive precursor that is heavily N-glycosylated and processed likely by host cell furin in the Golgi to yield the mature SU and TM proteins. The cleavage site between SU and TM requires the minimal sequence [KR]-X-[KR]-R. About 2 of the 9 disulfide bonds of gp41 are reduced by P4HB/PDI, following binding to CD4 receptor.

Its subcellular location is the virion membrane. It localises to the host cell membrane. The protein localises to the host endosome membrane. Functionally, oligomerizes in the host endoplasmic reticulum into predominantly trimers. In a second time, gp160 transits in the host Golgi, where glycosylation is completed. The precursor is then proteolytically cleaved in the trans-Golgi and thereby activated by cellular furin or furin-like proteases to produce gp120 and gp41. Its function is as follows. Attaches the virus to the host lymphoid cell by binding to the primary receptor CD4. This interaction induces a structural rearrangement creating a high affinity binding site for a chemokine coreceptor like CXCR4 and/or CCR5. Acts as a ligand for CD209/DC-SIGN and CLEC4M/DC-SIGNR, which are respectively found on dendritic cells (DCs), and on endothelial cells of liver sinusoids and lymph node sinuses. These interactions allow capture of viral particles at mucosal surfaces by these cells and subsequent transmission to permissive cells. HIV subverts the migration properties of dendritic cells to gain access to CD4+ T-cells in lymph nodes. Virus transmission to permissive T-cells occurs either in trans (without DCs infection, through viral capture and transmission), or in cis (following DCs productive infection, through the usual CD4-gp120 interaction), thereby inducing a robust infection. In trans infection, bound virions remain infectious over days and it is proposed that they are not degraded, but protected in non-lysosomal acidic organelles within the DCs close to the cell membrane thus contributing to the viral infectious potential during DCs' migration from the periphery to the lymphoid tissues. On arrival at lymphoid tissues, intact virions recycle back to DCs' cell surface allowing virus transmission to CD4+ T-cells. Acts as a class I viral fusion protein. Under the current model, the protein has at least 3 conformational states: pre-fusion native state, pre-hairpin intermediate state, and post-fusion hairpin state. During fusion of viral and target intracellular membranes, the coiled coil regions (heptad repeats) assume a trimer-of-hairpins structure, positioning the fusion peptide in close proximity to the C-terminal region of the ectodomain. The formation of this structure appears to drive apposition and subsequent fusion of viral and target cell membranes. Complete fusion occurs in host cell endosomes and is dynamin-dependent, however some lipid transfer might occur at the plasma membrane. The virus undergoes clathrin-dependent internalization long before endosomal fusion, thus minimizing the surface exposure of conserved viral epitopes during fusion and reducing the efficacy of inhibitors targeting these epitopes. Membranes fusion leads to delivery of the nucleocapsid into the cytoplasm. The polypeptide is Envelope glycoprotein gp160 (Homo sapiens (Human)).